A 371-amino-acid chain; its full sequence is Queuine tRNA-ribosyltransferase (371 aa).

Aspartate 89 acts as the Proton acceptor in catalysis. Substrate-binding positions include 89 to 93, aspartate 143, glutamine 185, and glycine 212; that span reads DSGGF. The tract at residues 243 to 249 is RNA binding; the sequence is GVGTPED. Residue aspartate 262 is the Nucleophile of the active site. The tract at residues 267 to 271 is RNA binding; important for wobble base 34 recognition; that stretch reads TRNAR. Residues cysteine 300, cysteine 302, cysteine 305, and histidine 331 each contribute to the Zn(2+) site.

The protein belongs to the queuine tRNA-ribosyltransferase family. Homodimer. Within each dimer, one monomer is responsible for RNA recognition and catalysis, while the other monomer binds to the replacement base PreQ1. Requires Zn(2+) as cofactor.

It catalyses the reaction 7-aminomethyl-7-carbaguanine + guanosine(34) in tRNA = 7-aminomethyl-7-carbaguanosine(34) in tRNA + guanine. It functions in the pathway tRNA modification; tRNA-queuosine biosynthesis. Catalyzes the base-exchange of a guanine (G) residue with the queuine precursor 7-aminomethyl-7-deazaguanine (PreQ1) at position 34 (anticodon wobble position) in tRNAs with GU(N) anticodons (tRNA-Asp, -Asn, -His and -Tyr). Catalysis occurs through a double-displacement mechanism. The nucleophile active site attacks the C1' of nucleotide 34 to detach the guanine base from the RNA, forming a covalent enzyme-RNA intermediate. The proton acceptor active site deprotonates the incoming PreQ1, allowing a nucleophilic attack on the C1' of the ribose to form the product. After dissociation, two additional enzymatic reactions on the tRNA convert PreQ1 to queuine (Q), resulting in the hypermodified nucleoside queuosine (7-(((4,5-cis-dihydroxy-2-cyclopenten-1-yl)amino)methyl)-7-deazaguanosine). The sequence is that of Queuine tRNA-ribosyltransferase from Nitrosomonas europaea (strain ATCC 19718 / CIP 103999 / KCTC 2705 / NBRC 14298).